Here is an 841-residue protein sequence, read N- to C-terminus: Transcription regulator protein BACH2 (841 aa).

A BTB domain is found at 37–103 (CDVTLIVERK…AYTAKLLLSR (67 aa)). Disordered regions lie at residues 153–173 (HEDC…TMDS), 204–226 (EALL…DALT), and 246–329 (SSHS…AACL). Positions 160 to 172 (AGEEEDEEEETMD) are enriched in acidic residues. Composition is skewed to basic and acidic residues over residues 214 to 224 (TDTKESSEKDA) and 298 to 313 (PDAK…DRKQ). A Phosphoserine modification is found at Ser-315. Glycyl lysine isopeptide (Lys-Gly) (interchain with G-Cter in SUMO2) cross-links involve residues Lys-382 and Lys-421. Ser-521 bears the Phosphoserine; by RPS6KB1 mark. A disordered region spans residues 583–610 (QSYGTNSSDESGSFSEADSESCPVQDRG). The span at 584–598 (SYGTNSSDESGSFSE) shows a compositional bias: polar residues. Positions 646–709 (FIHDVRRRSK…GELLDNFSCL (64 aa)) constitute a bZIP domain. Residues 651 to 667 (RRRSKNRIAAQRCRKRK) form a basic motif region. A leucine-zipper region spans residues 671–678 (IQNLECEI). Residues 777–816 (PGPPWAPSNTSENCTSGRRLEGTDPGTFSERGPPLEPRSQ) are disordered. The Nuclear export signal motif lies at 821 to 841 (DFCQEMTDKCTTDEQPRKDYT).

This sequence belongs to the bZIP family. CNC subfamily. Homodimer; disulfide-linked. Heterodimer of BACH2 and Maf-related transcription factors. Phosphorylation at Ser-521 downstream of the PI-3K pathway promotes nuclear export. In terms of processing, the reversible disulfide bond may provide a mechanism to regulate the activity in oxidative stress responses. B-cell specific.

Its subcellular location is the cytoplasm. The protein resides in the nucleus. Its function is as follows. Transcriptional regulator that acts as a repressor or activator. Binds to Maf recognition elements (MARE). Plays an important role in coordinating transcription activation and repression by MAFK. Induces apoptosis in response to oxidative stress through repression of the antiapoptotic factor HMOX1. Positively regulates the nuclear import of actin. Is a key regulator of adaptive immunity, crucial for the maintenance of regulatory T-cell function and B-cell maturation. The polypeptide is Transcription regulator protein BACH2 (BACH2) (Homo sapiens (Human)).